The sequence spans 452 residues: MAFSVVVLAAGKGTRMKSSLPKVLHKVGGVPMVQRIINTVRSLGADNIHLVYGHGGDQLKATVVEENLNWCLQAEQLGTGHAVQQAAPHINDDEDVLILVGDAPLIREDTLSALKAVKESCDLALLTVNLDDPTGMGRIIRENDNITAIVEHKDATEAQRAIKEINTGMMMMSGADLKRWLGELSNDNAQGEYYLTDVIAMAASEGKRIQSAQPQSAVEVEGVNNRLQLANLERALQNRQADELMTNGVTLLDPSRFDLRGTLQTGNDVIIDVNVIVEGDVTLGNNVEIGANCILRNCTIADNAVIEANSIIEEARVGEACTVGPYARLRPGAVMQKNAKVGNFVEMKKAVLGEGAKANHLTYLGDAEVGAKANIGAGTITCNYDGVNKSKTVIGENAFIGSNSSLVAPVNIGKGATVGAGSVITSTVDEAALAVARGKQRNIPNWPRPTKK.

The pyrophosphorylase stretch occupies residues 1–226 (MAFSVVVLAA…AVEVEGVNNR (226 aa)). Residues 8–11 (LAAG), Lys22, Gln73, and 78–79 (GT) each bind UDP-N-acetyl-alpha-D-glucosamine. Residue Asp102 coordinates Mg(2+). Residues Gly137, Glu151, Asn166, and Asn224 each coordinate UDP-N-acetyl-alpha-D-glucosamine. Asn224 serves as a coordination point for Mg(2+). A linker region spans residues 227 to 247 (LQLANLERALQNRQADELMTN). The interval 248 to 452 (GVTLLDPSRF…IPNWPRPTKK (205 aa)) is N-acetyltransferase. UDP-N-acetyl-alpha-D-glucosamine contacts are provided by Arg330 and Lys348. The Proton acceptor role is filled by His360. UDP-N-acetyl-alpha-D-glucosamine-binding residues include Tyr363 and Asn374. Acetyl-CoA contacts are provided by residues Ala377, 383 to 384 (NY), Ser402, Ala420, and Arg437.

In the N-terminal section; belongs to the N-acetylglucosamine-1-phosphate uridyltransferase family. It in the C-terminal section; belongs to the transferase hexapeptide repeat family. As to quaternary structure, homotrimer. The cofactor is Mg(2+).

It is found in the cytoplasm. It catalyses the reaction alpha-D-glucosamine 1-phosphate + acetyl-CoA = N-acetyl-alpha-D-glucosamine 1-phosphate + CoA + H(+). The catalysed reaction is N-acetyl-alpha-D-glucosamine 1-phosphate + UTP + H(+) = UDP-N-acetyl-alpha-D-glucosamine + diphosphate. The protein operates within nucleotide-sugar biosynthesis; UDP-N-acetyl-alpha-D-glucosamine biosynthesis; N-acetyl-alpha-D-glucosamine 1-phosphate from alpha-D-glucosamine 6-phosphate (route II): step 2/2. Its pathway is nucleotide-sugar biosynthesis; UDP-N-acetyl-alpha-D-glucosamine biosynthesis; UDP-N-acetyl-alpha-D-glucosamine from N-acetyl-alpha-D-glucosamine 1-phosphate: step 1/1. It functions in the pathway bacterial outer membrane biogenesis; LPS lipid A biosynthesis. In terms of biological role, catalyzes the last two sequential reactions in the de novo biosynthetic pathway for UDP-N-acetylglucosamine (UDP-GlcNAc). The C-terminal domain catalyzes the transfer of acetyl group from acetyl coenzyme A to glucosamine-1-phosphate (GlcN-1-P) to produce N-acetylglucosamine-1-phosphate (GlcNAc-1-P), which is converted into UDP-GlcNAc by the transfer of uridine 5-monophosphate (from uridine 5-triphosphate), a reaction catalyzed by the N-terminal domain. The polypeptide is Bifunctional protein GlmU (Alteromonas mediterranea (strain DSM 17117 / CIP 110805 / LMG 28347 / Deep ecotype)).